The chain runs to 198 residues: ATP synthase subunit b (198 aa).

A helical transmembrane segment spans residues 49–67; the sequence is IWKWANFLILAGGLGYLVG.

Belongs to the ATPase B chain family. F-type ATPases have 2 components, F(1) - the catalytic core - and F(0) - the membrane proton channel. F(1) has five subunits: alpha(3), beta(3), gamma(1), delta(1), epsilon(1). F(0) has three main subunits: a(1), b(2) and c(10-14). The alpha and beta chains form an alternating ring which encloses part of the gamma chain. F(1) is attached to F(0) by a central stalk formed by the gamma and epsilon chains, while a peripheral stalk is formed by the delta and b chains.

The protein localises to the cell inner membrane. Its function is as follows. F(1)F(0) ATP synthase produces ATP from ADP in the presence of a proton or sodium gradient. F-type ATPases consist of two structural domains, F(1) containing the extramembraneous catalytic core and F(0) containing the membrane proton channel, linked together by a central stalk and a peripheral stalk. During catalysis, ATP synthesis in the catalytic domain of F(1) is coupled via a rotary mechanism of the central stalk subunits to proton translocation. In terms of biological role, component of the F(0) channel, it forms part of the peripheral stalk, linking F(1) to F(0). The sequence is that of ATP synthase subunit b from Solibacter usitatus (strain Ellin6076).